We begin with the raw amino-acid sequence, 417 residues long: MSGTSSIARSTMAYVLAGGRGSRLLELTDTRAKPAVYFGGKSRIIDFALSNAVNSGIRRIGVATQYKAHSLIRHMQRGWNFFRPERNEGFDILPASQRVSETQWYEGTADAVYQNLDIIAGYEPEYMIILAGDHIYKMDYEIMLHQHVERQADVTVGCIEVPREEATGFGVMQVDDTGRITAFLEKPSDPPGMPGQPDIALASMGIYVFKTKFLFDVLRRDAADPDSKHDFGGDIIPDLVENGTAIAHRFSDSCVRSSKTAEAYWRDVGTLDSYWQANLDLTNVVPTLDLYDSGWPIWTYNEISPPAKFVYDDVGRRGMAVDSLVAGGCIVSGASLSRSLISTGCRVHSFSQLHGTVVLPYADIARSARLRNTVVDRGVRIPEGLVVGEDPELDAKRFRRTEKGICLITQPMIDRLG.

Residues Y105, G170, 185-186 (EK), and S203 contribute to the alpha-D-glucose 1-phosphate site.

It belongs to the bacterial/plant glucose-1-phosphate adenylyltransferase family. In terms of assembly, homotetramer.

The enzyme catalyses alpha-D-glucose 1-phosphate + ATP + H(+) = ADP-alpha-D-glucose + diphosphate. The protein operates within glycan biosynthesis; glycogen biosynthesis. In terms of biological role, involved in the biosynthesis of ADP-glucose, a building block required for the elongation reactions to produce glycogen. Catalyzes the reaction between ATP and alpha-D-glucose 1-phosphate (G1P) to produce pyrophosphate and ADP-Glc. The protein is Glucose-1-phosphate adenylyltransferase of Granulibacter bethesdensis (strain ATCC BAA-1260 / CGDNIH1).